A 316-amino-acid polypeptide reads, in one-letter code: Olfactory receptor 2AG1 (316 aa).

At 1–25 the chain is on the extracellular side; that stretch reads MELWNFTLGSGFILVGILNDSGSPE. Residues Asn5 and Asn19 are each glycosylated (N-linked (GlcNAc...) asparagine). The chain crosses the membrane as a helical span at residues 26-49; the sequence is LLCATITILYLLALISNGLLLLAI. Over 50–57 the chain is Cytoplasmic; sequence TMEARLHM. Residues 58–79 form a helical membrane-spanning segment; that stretch reads PMYLLLGQLSLMDLLFTSVVTP. Over 80–100 the chain is Extracellular; sequence KALADFLRRENTISFGGCALQ. The cysteines at positions 97 and 189 are disulfide-linked. A helical membrane pass occupies residues 101–120; it reads MFLALTMGGAEDLLLAFMAY. Residues 121–139 are Cytoplasmic-facing; sequence DRYVAICHPLTYMTLMSSR. Residues 140–158 traverse the membrane as a helical segment; that stretch reads ACWLMVATSWILASLSALI. Residues 159–195 lie on the Extracellular side of the membrane; that stretch reads YTVYTMHYPFCRAQEIRHLLCEIPHLLKVACADTSRY. Residues 196–219 traverse the membrane as a helical segment; the sequence is ELMVYVMGVTFLIPSLAAILASYT. At 220–236 the chain is on the cytoplasmic side; the sequence is QILLTVLHMPSNEGRKK. A helical membrane pass occupies residues 237-259; sequence ALVTCSSHLTVVGMFYGAATFMY. Over 260–272 the chain is Extracellular; sequence VLPSSFHSTRQDN. A helical membrane pass occupies residues 273-292; the sequence is IISVFYTIVTPALNPLIYSL. The Cytoplasmic segment spans residues 293–316; the sequence is RNKEVMRALRRVLGKYMLPAHSTL.

It belongs to the G-protein coupled receptor 1 family.

The protein resides in the cell membrane. Odorant receptor. This is Olfactory receptor 2AG1 (OR2AG1) from Homo sapiens (Human).